The sequence spans 640 residues: Threonine--tRNA ligase (640 aa).

The TGS domain occupies 1-61 (MPAITLPDGS…EHDAYVEIVT (61 aa)). Residues 242–533 (DHRRLGRTQD…LIEHYGGALP (292 aa)) are catalytic. Positions 333, 384, and 510 each coordinate Zn(2+).

The protein belongs to the class-II aminoacyl-tRNA synthetase family. Homodimer. It depends on Zn(2+) as a cofactor.

It is found in the cytoplasm. It catalyses the reaction tRNA(Thr) + L-threonine + ATP = L-threonyl-tRNA(Thr) + AMP + diphosphate + H(+). In terms of biological role, catalyzes the attachment of threonine to tRNA(Thr) in a two-step reaction: L-threonine is first activated by ATP to form Thr-AMP and then transferred to the acceptor end of tRNA(Thr). Also edits incorrectly charged L-seryl-tRNA(Thr). The protein is Threonine--tRNA ligase of Halorhodospira halophila (strain DSM 244 / SL1) (Ectothiorhodospira halophila (strain DSM 244 / SL1)).